A 147-amino-acid polypeptide reads, in one-letter code: UPF0260 protein Ent638_2368 (147 aa).

It belongs to the UPF0260 family.

The protein is UPF0260 protein Ent638_2368 of Enterobacter sp. (strain 638).